We begin with the raw amino-acid sequence, 430 residues long: Adenylosuccinate synthetase (430 aa).

GTP contacts are provided by residues 12-18 (GDEGKGK) and 40-42 (GHT). The active-site Proton acceptor is the Asp13. 2 residues coordinate Mg(2+): Asp13 and Gly40. IMP contacts are provided by residues 13–16 (DEGK), 38–41 (NAGH), Thr128, Arg142, Gln223, Thr238, and Arg302. His41 (proton donor) is an active-site residue. 298–304 (TTTGRPR) serves as a coordination point for substrate. GTP is bound by residues Arg304, 330-332 (LLD), and 412-414 (SVG).

Belongs to the adenylosuccinate synthetase family. As to quaternary structure, homodimer. It depends on Mg(2+) as a cofactor.

It localises to the cytoplasm. The enzyme catalyses IMP + L-aspartate + GTP = N(6)-(1,2-dicarboxyethyl)-AMP + GDP + phosphate + 2 H(+). The protein operates within purine metabolism; AMP biosynthesis via de novo pathway; AMP from IMP: step 1/2. Plays an important role in the de novo pathway of purine nucleotide biosynthesis. Catalyzes the first committed step in the biosynthesis of AMP from IMP. This Listeria monocytogenes serotype 4b (strain CLIP80459) protein is Adenylosuccinate synthetase.